The following is a 323-amino-acid chain: tRNA dimethylallyltransferase (323 aa).

12-19 (GPTAAGKT) lines the ATP pocket. A substrate-binding site is contributed by 14-19 (TAAGKT). 2 interaction with substrate tRNA regions span residues 37 to 40 (DSAL) and 161 to 165 (QRLIR).

The protein belongs to the IPP transferase family. As to quaternary structure, monomer. Mg(2+) serves as cofactor.

It carries out the reaction adenosine(37) in tRNA + dimethylallyl diphosphate = N(6)-dimethylallyladenosine(37) in tRNA + diphosphate. Functionally, catalyzes the transfer of a dimethylallyl group onto the adenine at position 37 in tRNAs that read codons beginning with uridine, leading to the formation of N6-(dimethylallyl)adenosine (i(6)A). The sequence is that of tRNA dimethylallyltransferase from Pseudomonas syringae pv. syringae (strain B728a).